The sequence spans 143 residues: Ribonuclease H (143 aa).

Residues 1-140 (MKVEIYTDGA…VDALANLGIE (140 aa)) enclose the RNase H type-1 domain. Residues D8, E46, D68, and D132 each coordinate Mg(2+).

Belongs to the RNase H family. In terms of assembly, monomer. It depends on Mg(2+) as a cofactor.

It localises to the cytoplasm. The enzyme catalyses Endonucleolytic cleavage to 5'-phosphomonoester.. Endonuclease that specifically degrades the RNA of RNA-DNA hybrids. This Legionella pneumophila (strain Paris) protein is Ribonuclease H.